The sequence spans 31 residues: Cyclotide vpub-A (31 aa).

The segment at residues 1-31 (GVIPCGESCVFIPCISAVIGCSCKSKVCYRN) is a cross-link (cyclopeptide (Gly-Asn)). 3 disulfide bridges follow: cysteine 5/cysteine 21, cysteine 9/cysteine 23, and cysteine 14/cysteine 28.

The protein belongs to the cyclotide family. Bracelet subfamily. This is a cyclic peptide.

Its function is as follows. Probably participates in a plant defense mechanism. In Viola pubescens (Downy yellow violet), this protein is Cyclotide vpub-A.